The chain runs to 296 residues: Protease HtpX homolog (296 aa).

The next 2 helical transmembrane spans lie at 14-34 (VVLLIVFFCLLAAIGAAVGYL) and 39-59 (YQFGLVLALIIGVIYAVSMIF). Residue His-143 coordinates Zn(2+). Glu-144 is a catalytic residue. Position 147 (His-147) interacts with Zn(2+). The next 2 helical transmembrane spans lie at 158 to 178 (IAVALASAVTLISSIGSRMLF) and 195 to 215 (ILVLIFSILSLILAPLAASLV). Glu-224 contributes to the Zn(2+) binding site.

Belongs to the peptidase M48B family. Zn(2+) serves as cofactor.

It localises to the cell membrane. The polypeptide is Protease HtpX homolog (Streptococcus agalactiae serotype III (strain NEM316)).